We begin with the raw amino-acid sequence, 315 residues long: Methionyl-tRNA formyltransferase (315 aa).

113–116 contributes to the (6S)-5,6,7,8-tetrahydrofolate binding site; the sequence is SLLP.

Belongs to the Fmt family.

It catalyses the reaction L-methionyl-tRNA(fMet) + (6R)-10-formyltetrahydrofolate = N-formyl-L-methionyl-tRNA(fMet) + (6S)-5,6,7,8-tetrahydrofolate + H(+). In terms of biological role, attaches a formyl group to the free amino group of methionyl-tRNA(fMet). The formyl group appears to play a dual role in the initiator identity of N-formylmethionyl-tRNA by promoting its recognition by IF2 and preventing the misappropriation of this tRNA by the elongation apparatus. The chain is Methionyl-tRNA formyltransferase from Yersinia pseudotuberculosis serotype O:1b (strain IP 31758).